The following is a 177-amino-acid chain: Large ribosomal subunit protein uL6 (177 aa).

It belongs to the universal ribosomal protein uL6 family. In terms of assembly, part of the 50S ribosomal subunit.

Functionally, this protein binds to the 23S rRNA, and is important in its secondary structure. It is located near the subunit interface in the base of the L7/L12 stalk, and near the tRNA binding site of the peptidyltransferase center. The chain is Large ribosomal subunit protein uL6 from Chromobacterium violaceum (strain ATCC 12472 / DSM 30191 / JCM 1249 / CCUG 213 / NBRC 12614 / NCIMB 9131 / NCTC 9757 / MK).